Here is a 220-residue protein sequence, read N- to C-terminus: Glycerol-3-phosphate acyltransferase (220 aa).

5 helical membrane passes run 4-24 (LTILMIILAYLGGSLSSAVLV), 53-73 (VAALVVLLLDVLKGTAPVYLA), 80-100 (PVYLGFIGVAACLGHMYPIFF), 116-136 (MPIGFTMGGAVIGTWLVVLLV), and 138-158 (GYSSLASIITVLLSPLFTYLI). The interval 193 to 220 (WGRQAQRRQEEVGEMDDVAQKRDERDKK) is disordered. Over residues 210–220 (VAQKRDERDKK) the composition is skewed to basic and acidic residues.

It belongs to the PlsY family. Probably interacts with PlsX.

It localises to the cell inner membrane. It carries out the reaction an acyl phosphate + sn-glycerol 3-phosphate = a 1-acyl-sn-glycero-3-phosphate + phosphate. It functions in the pathway lipid metabolism; phospholipid metabolism. In terms of biological role, catalyzes the transfer of an acyl group from acyl-phosphate (acyl-PO(4)) to glycerol-3-phosphate (G3P) to form lysophosphatidic acid (LPA). This enzyme utilizes acyl-phosphate as fatty acyl donor, but not acyl-CoA or acyl-ACP. This is Glycerol-3-phosphate acyltransferase from Aeromonas salmonicida (strain A449).